We begin with the raw amino-acid sequence, 171 residues long: Adenine phosphoribosyltransferase (171 aa).

The protein belongs to the purine/pyrimidine phosphoribosyltransferase family. In terms of assembly, homodimer.

The protein resides in the cytoplasm. The enzyme catalyses AMP + diphosphate = 5-phospho-alpha-D-ribose 1-diphosphate + adenine. It functions in the pathway purine metabolism; AMP biosynthesis via salvage pathway; AMP from adenine: step 1/1. In terms of biological role, catalyzes a salvage reaction resulting in the formation of AMP, that is energically less costly than de novo synthesis. The polypeptide is Adenine phosphoribosyltransferase (Mycoplasma mobile (strain ATCC 43663 / 163K / NCTC 11711) (Mesomycoplasma mobile)).